The primary structure comprises 175 residues: Gamma-crystallin B (175 aa).

2 consecutive Beta/gamma crystallin 'Greek key' domains span residues 2 to 40 (GKIT…RVDS) and 41 to 83 (GCWM…RLIP). The N-linked (Glc) (glycation) lysine; in vitro glycan is linked to K3. A disulfide bridge links C19 with C23. A connecting peptide region spans residues 84 to 88 (QHTGT). Beta/gamma crystallin 'Greek key' domains lie at 89–129 (FRMR…NVLE) and 130–172 (GSWV…RRVM).

It belongs to the beta/gamma-crystallin family.

Its function is as follows. Crystallins are the dominant structural components of the vertebrate eye lens. This is Gamma-crystallin B (CRYGB) from Bos taurus (Bovine).